The primary structure comprises 371 residues: Zygote-specific protein 3 (371 aa).

A signal peptide spans 1–24 (MLRSAGRVAAVALLALFALGCVSA). Residue asparagine 41 is glycosylated (N-linked (GlcNAc...) asparagine). ANK repeat units lie at residues 62–91 (TRRL…LARV) and 94–123 (GTTT…DPNA). WW domains follow at residues 159 to 187 (EPGA…WAVP) and 283 to 313 (YATP…WELP).

It localises to the endoplasmic reticulum lumen. Its function is as follows. May have a role in the remodeling of the endoplasmic reticulum upon zygote formation. The protein is Zygote-specific protein 3 (ZYS3) of Chlamydomonas reinhardtii (Chlamydomonas smithii).